We begin with the raw amino-acid sequence, 1368 residues long: DNA-directed RNA polymerase subunit beta (1368 aa).

Belongs to the RNA polymerase beta chain family. The RNAP catalytic core consists of 2 alpha, 1 beta, 1 beta' and 1 omega subunit. When a sigma factor is associated with the core the holoenzyme is formed, which can initiate transcription.

It catalyses the reaction RNA(n) + a ribonucleoside 5'-triphosphate = RNA(n+1) + diphosphate. In terms of biological role, DNA-dependent RNA polymerase catalyzes the transcription of DNA into RNA using the four ribonucleoside triphosphates as substrates. The polypeptide is DNA-directed RNA polymerase subunit beta (Janthinobacterium sp. (strain Marseille) (Minibacterium massiliensis)).